A 445-amino-acid polypeptide reads, in one-letter code: Phosphoglucosamine mutase (445 aa).

Serine 102 functions as the Phosphoserine intermediate in the catalytic mechanism. The Mg(2+) site is built by serine 102, aspartate 240, aspartate 242, and aspartate 244. Serine 102 carries the phosphoserine modification.

This sequence belongs to the phosphohexose mutase family. The cofactor is Mg(2+). Activated by phosphorylation.

It carries out the reaction alpha-D-glucosamine 1-phosphate = D-glucosamine 6-phosphate. Catalyzes the conversion of glucosamine-6-phosphate to glucosamine-1-phosphate. In Mycobacterium ulcerans (strain Agy99), this protein is Phosphoglucosamine mutase.